A 63-amino-acid polypeptide reads, in one-letter code: MKVSELKAKSIEELNAELLELLREQFNYRMQASTGQLAQTHLLRIVRRNIARVKTIITEKAGK.

This sequence belongs to the universal ribosomal protein uL29 family.

The sequence is that of Large ribosomal subunit protein uL29 from Colwellia psychrerythraea (strain 34H / ATCC BAA-681) (Vibrio psychroerythus).